A 310-amino-acid chain; its full sequence is DNA repair nuclease APEX1 (310 aa).

A disordered region spans residues methionine 1–arginine 51. Over residues proline 41–arginine 51 the composition is skewed to basic and acidic residues. The Mg(2+) site is built by aspartate 63 and glutamate 89. Residue tyrosine 164 is part of the active site. The Mg(2+) site is built by aspartate 203, asparagine 205, and aspartate 300. The Proton donor/acceptor role is filled by aspartate 203.

The protein belongs to the DNA repair enzymes AP/ExoA family. The cofactor is Mg(2+). It depends on Mn(2+) as a cofactor.

The protein localises to the nucleus. The protein resides in the nucleolus. It is found in the nucleus speckle. It localises to the endoplasmic reticulum. Its subcellular location is the cytoplasm. The protein localises to the mitochondrion. It catalyses the reaction Exonucleolytic cleavage in the 3'- to 5'-direction to yield nucleoside 5'-phosphates.. Functionally, functions as an apurinic/apyrimidinic (AP) endodeoxyribonuclease in the DNA base excision repair (BER) pathway of DNA lesions induced by oxidative and alkylating agents. Initiates repair of AP sites in DNA by catalyzing hydrolytic incision of the phosphodiester backbone immediately adjacent to the damage, generating a single-strand break with 5'-deoxyribose phosphate and 3'-hydroxyl ends. Has 3'-5' exoribonuclease activity on mismatched deoxyribonucleotides at the 3' termini of nicked or gapped DNA molecules during short-patch BER. May also play a role in the epigenetic regulation of gene expression by participating in DNA demethylation. Required for passage through the mid-blastula transition MBT. May also act as an endoribonuclease involved in the control of single-stranded RNA metabolism. Has no redox activity. Binds DNA and RNA. This Danio rerio (Zebrafish) protein is DNA repair nuclease APEX1 (apex1).